A 309-amino-acid polypeptide reads, in one-letter code: uncharacterized protein (309 aa).

An RPE1 insert domain is found at 9 to 55 (NFLYNIANKDGFKGYKECRTSAYKNVFDDSSTKSTSKFHLGISDTKN). The chain crosses the membrane as a helical span at residues 62-82 (IIGLILIIFAGVLFYAYILQH).

It belongs to the LicD transferase family.

Its subcellular location is the membrane. This is an uncharacterized protein from Rickettsia typhi (strain ATCC VR-144 / Wilmington).